A 720-amino-acid polypeptide reads, in one-letter code: Methionine--tRNA ligase (720 aa).

The short motif at 27–37 (PYANGQIHIGH) is the 'HIGH' region element. 4 residues coordinate Zn(2+): Cys-158, Cys-161, Cys-171, and Cys-174. The 'KMSKS' region signature appears at 348 to 352 (KMSKS). Lys-351 serves as a coordination point for ATP. One can recognise a tRNA-binding domain in the interval 614 to 720 (DFAKVDLRIA…SGAKPGMRVK (107 aa)).

This sequence belongs to the class-I aminoacyl-tRNA synthetase family. MetG type 1 subfamily. As to quaternary structure, homodimer. It depends on Zn(2+) as a cofactor.

Its subcellular location is the cytoplasm. It carries out the reaction tRNA(Met) + L-methionine + ATP = L-methionyl-tRNA(Met) + AMP + diphosphate. Is required not only for elongation of protein synthesis but also for the initiation of all mRNA translation through initiator tRNA(fMet) aminoacylation. The protein is Methionine--tRNA ligase of Burkholderia ambifaria (strain ATCC BAA-244 / DSM 16087 / CCUG 44356 / LMG 19182 / AMMD) (Burkholderia cepacia (strain AMMD)).